The primary structure comprises 326 residues: MAFISFPPRHPSSSARLPLTLIALDDWALSSITGVDSEKYIQGQVTADVSQMTEQQHLLAAHCDAKGKMWSTLRLFRERDGFAWIERRSVREAQLTELKKYAVFSKVVIAPDDERVLLGVAGFQARAALANVFSELPNSENQVVRDGASTLLWFEHPAERFLLVTDVATANMLTEKLHGEAELNNSQQWLALDIEAGIPVIDAANSGQFIPQATNLQALGGISFKKGCYTGQEMVARAKFRGANKRALWLLAGKASRVPEAGEDLELQMGENWRRTGAILAATQLDDGQLLVQAVMNNDLEAESVFRVRDDANTLHIVPLPYSLEE.

Folate-binding residues include tryptophan 27 and tryptophan 189.

The protein belongs to the tRNA-modifying YgfZ family.

It localises to the cytoplasm. Its function is as follows. Folate-binding protein involved in regulating the level of ATP-DnaA and in the modification of some tRNAs. It is probably a key factor in regulatory networks that act via tRNA modification, such as initiation of chromosomal replication. This Salmonella schwarzengrund (strain CVM19633) protein is tRNA-modifying protein YgfZ.